Consider the following 94-residue polypeptide: CRISPR-associated endoribonuclease Cas2 (94 aa).

Asp11 is a Mg(2+) binding site.

It belongs to the CRISPR-associated endoribonuclease Cas2 protein family. As to quaternary structure, homodimer, forms a heterotetramer with a Cas1 homodimer. Mg(2+) is required as a cofactor.

Its function is as follows. CRISPR (clustered regularly interspaced short palindromic repeat), is an adaptive immune system that provides protection against mobile genetic elements (viruses, transposable elements and conjugative plasmids). CRISPR clusters contain sequences complementary to antecedent mobile elements and target invading nucleic acids. CRISPR clusters are transcribed and processed into CRISPR RNA (crRNA). Functions as a ssRNA-specific endoribonuclease. Involved in the integration of spacer DNA into the CRISPR cassette. The protein is CRISPR-associated endoribonuclease Cas2 of Allochromatium vinosum (strain ATCC 17899 / DSM 180 / NBRC 103801 / NCIMB 10441 / D) (Chromatium vinosum).